We begin with the raw amino-acid sequence, 411 residues long: Serine hydroxymethyltransferase (411 aa).

120–122 (GHL) is a (6S)-5,6,7,8-tetrahydrofolate binding site. Residue Lys225 is modified to N6-(pyridoxal phosphate)lysine. 350-352 (SPF) contacts (6S)-5,6,7,8-tetrahydrofolate.

Belongs to the SHMT family. As to quaternary structure, homodimer. The cofactor is pyridoxal 5'-phosphate.

It is found in the cytoplasm. The enzyme catalyses (6R)-5,10-methylene-5,6,7,8-tetrahydrofolate + glycine + H2O = (6S)-5,6,7,8-tetrahydrofolate + L-serine. It functions in the pathway one-carbon metabolism; tetrahydrofolate interconversion. The protein operates within amino-acid biosynthesis; glycine biosynthesis; glycine from L-serine: step 1/1. Catalyzes the reversible interconversion of serine and glycine with tetrahydrofolate (THF) serving as the one-carbon carrier. This reaction serves as the major source of one-carbon groups required for the biosynthesis of purines, thymidylate, methionine, and other important biomolecules. Also exhibits THF-independent aldolase activity toward beta-hydroxyamino acids, producing glycine and aldehydes, via a retro-aldol mechanism. The polypeptide is Serine hydroxymethyltransferase (Limosilactobacillus reuteri (strain DSM 20016) (Lactobacillus reuteri)).